A 464-amino-acid polypeptide reads, in one-letter code: Asparagine--tRNA ligase (464 aa).

The protein belongs to the class-II aminoacyl-tRNA synthetase family. In terms of assembly, homodimer.

It localises to the cytoplasm. The enzyme catalyses tRNA(Asn) + L-asparagine + ATP = L-asparaginyl-tRNA(Asn) + AMP + diphosphate + H(+). In Cytophaga hutchinsonii (strain ATCC 33406 / DSM 1761 / CIP 103989 / NBRC 15051 / NCIMB 9469 / D465), this protein is Asparagine--tRNA ligase.